Consider the following 95-residue polypeptide: Small ribosomal subunit protein bS18 (95 aa).

The protein belongs to the bacterial ribosomal protein bS18 family. As to quaternary structure, part of the 30S ribosomal subunit. Forms a tight heterodimer with protein bS6.

Binds as a heterodimer with protein bS6 to the central domain of the 16S rRNA, where it helps stabilize the platform of the 30S subunit. The polypeptide is Small ribosomal subunit protein bS18 (Ehrlichia ruminantium (strain Gardel)).